The chain runs to 196 residues: Agamous-like MADS-box protein AGL70 (196 aa).

The MADS-box domain maps to 1–61 (MGRRKVEIKR…GKLYDSASGD (61 aa)). Residues 8–15 (IKRIENKS) carry the Nuclear localization signal motif. The K-box domain maps to 80-170 (ALDLAEKIRN…ASQVGKKTFL (91 aa)).

In terms of tissue distribution, mostly expressed in roots, leaves and flowers, and, to a lower extent, in inflorescence, siliques, pollen and shoots.

The protein localises to the nucleus. In terms of biological role, probable transcription factor involved in the negative regulation of flowering time, probably through the photoperiodic and vernalization pathways; more efficient in cv. Landsberg erecta than in cv. Columbia background. Prevents premature flowering. Involved in the modulation of vernalization impact on flowering according to genotype acclimation to altitude. The sequence is that of Agamous-like MADS-box protein AGL70 from Arabidopsis thaliana (Mouse-ear cress).